Consider the following 319-residue polypeptide: Replication factor C small subunit 2 (319 aa).

44-51 (GPPGTGKT) serves as a coordination point for ATP.

It belongs to the activator 1 small subunits family. RfcS subfamily. Heteromultimer composed of small subunits (RfcS) and large subunits (RfcL).

Part of the RFC clamp loader complex which loads the PCNA sliding clamp onto DNA. This chain is Replication factor C small subunit 2, found in Pyrobaculum aerophilum (strain ATCC 51768 / DSM 7523 / JCM 9630 / CIP 104966 / NBRC 100827 / IM2).